The chain runs to 247 residues: DNA polymerase sliding clamp (247 aa).

It belongs to the PCNA family. Homotrimer. The subunits circularize to form a toroid; DNA passes through its center. Replication factor C (RFC) is required to load the toroid on the DNA.

Functionally, sliding clamp subunit that acts as a moving platform for DNA processing. Responsible for tethering the catalytic subunit of DNA polymerase and other proteins to DNA during high-speed replication. The polypeptide is DNA polymerase sliding clamp (Methanosphaerula palustris (strain ATCC BAA-1556 / DSM 19958 / E1-9c)).